An 87-amino-acid chain; its full sequence is UPF0250 protein Spro_1197 (87 aa).

The protein belongs to the UPF0250 family.

In Serratia proteamaculans (strain 568), this protein is UPF0250 protein Spro_1197.